The sequence spans 1247 residues: Leucine-rich repeat-containing protein 53 (1247 aa).

LRR repeat units lie at residues 34–55, 58–79, 82–102, 108–129, 132–153, 158–179, and 182–203; these read TTRV…NLSL, NLAL…ALHG, MLRT…TDHT, SLQV…WFRN, GLTR…SFGG, SLRY…AFRP, and QLQE…FTPL. Residues 214 to 271 form the LRRCT domain; the sequence is NQWSCTCDLHPLARFLRNYIKSSAHTLRNAKDLNCQPSTAAVAAAQSVLRLSETNCDS. The chain crosses the membrane as a helical span at residues 294–314; sequence LLTVLGFAGAVGLTCLGLVVF. Disordered stretches follow at residues 828–866, 887–927, and 1223–1247; these read SAGH…EDAT, VLPF…SPRN, and ENSA…LETE. Polar residues-rich tracts occupy residues 898-927 and 1238-1247; these read DQGT…SPRN and YATTSPLETE.

The protein resides in the membrane. The protein is Leucine-rich repeat-containing protein 53 (LRRC53) of Homo sapiens (Human).